A 121-amino-acid chain; its full sequence is Large ribosomal subunit protein bL19 (121 aa).

It belongs to the bacterial ribosomal protein bL19 family.

Its function is as follows. This protein is located at the 30S-50S ribosomal subunit interface and may play a role in the structure and function of the aminoacyl-tRNA binding site. This is Large ribosomal subunit protein bL19 from Bifidobacterium adolescentis (strain ATCC 15703 / DSM 20083 / NCTC 11814 / E194a).